The primary structure comprises 246 residues: Small ribosomal subunit protein uS2 (246 aa).

This sequence belongs to the universal ribosomal protein uS2 family.

The chain is Small ribosomal subunit protein uS2 from Burkholderia cenocepacia (strain HI2424).